The sequence spans 499 residues: Phenylalanine--tRNA ligase alpha subunit (499 aa).

L-phenylalanine is bound by residues Thr-330, Gln-372–Glu-374, and Tyr-412. Mg(2+) is bound at residue Glu-414. Residue Phe-438 coordinates L-phenylalanine.

This sequence belongs to the class-II aminoacyl-tRNA synthetase family. Phe-tRNA synthetase alpha subunit type 2 subfamily. In terms of assembly, tetramer of two alpha and two beta subunits. Mg(2+) serves as cofactor.

It is found in the cytoplasm. The catalysed reaction is tRNA(Phe) + L-phenylalanine + ATP = L-phenylalanyl-tRNA(Phe) + AMP + diphosphate + H(+). The chain is Phenylalanine--tRNA ligase alpha subunit (frs2) from Schizosaccharomyces pombe (strain 972 / ATCC 24843) (Fission yeast).